Reading from the N-terminus, the 150-residue chain is Arginine repressor (150 aa).

Belongs to the ArgR family.

It localises to the cytoplasm. It functions in the pathway amino-acid biosynthesis; L-arginine biosynthesis [regulation]. Functionally, regulates arginine biosynthesis genes. The protein is Arginine repressor of Clostridium botulinum (strain Loch Maree / Type A3).